The chain runs to 360 residues: Type II methyltransferase M.BglII (360 aa).

The disordered stretch occupies residues 316–341; the sequence is TRQRKGSKPSLDSKAHPEEHHKKEIV. The segment covering 326–341 has biased composition (basic and acidic residues); the sequence is LDSKAHPEEHHKKEIV.

The protein belongs to the N(4)/N(6)-methyltransferase family. N(4) subfamily.

It catalyses the reaction a 2'-deoxycytidine in DNA + S-adenosyl-L-methionine = an N(4)-methyl-2'-deoxycytidine in DNA + S-adenosyl-L-homocysteine + H(+). Its function is as follows. A beta subtype methylase, recognizes the double-stranded sequence 5'-AGATCT-3', methylates C-5 on both strands, and protects the DNA from cleavage by the BglII endonuclease. This chain is Type II methyltransferase M.BglII, found in Bacillus subtilis.